Consider the following 437-residue polypeptide: MGNLVAIVGRPNVGKSTLFNRLTKTRQAIVNEQAGTTRDRQYGKSEWVGHEFSVVDTGGWVVNSDDVFEEEIRKQVSLAIDEADVILFVVDVVNGVTDLDMAVASILRRTKKPVIMVANKTDNNELQYNAAEFYKLGLGDPYCISALSGSGTGELLDLVVGKFSKEGEELLDEDIPRFAVVGRPNAGKSSIINAFIGEDRNIVTEIAGTTRDSIYTRYEKFGFDFYLVDTAGIRKKNKVSEDLEYYSVIRSIRSIENSDVCILMLDATRGIEGQDLNIFSLIQRNQKGLVVVVNKWDLVENKNAKVMKTYEEAIRSRLAPFVDFPIIFASALTKQRIFKVLETAKEVYQARTTRIPTARLNEEMLPLIEAYPPPSNKGKYIKIKYCTQLPNTQVPSFVFFANLPQYVKEPYKRFLENKIREKWNLSGTPINIFIRQK.

EngA-type G domains follow at residues asparagine 3 to glycine 167 and proline 176 to threonine 352. Residues glycine 9 to serine 16, aspartate 56 to tryptophan 60, asparagine 119 to aspartate 122, glycine 182 to serine 189, aspartate 229 to isoleucine 233, and asparagine 294 to aspartate 297 contribute to the GTP site. A KH-like domain is found at threonine 353–lysine 437.

It belongs to the TRAFAC class TrmE-Era-EngA-EngB-Septin-like GTPase superfamily. EngA (Der) GTPase family. In terms of assembly, associates with the 50S ribosomal subunit.

GTPase that plays an essential role in the late steps of ribosome biogenesis. In Phocaeicola vulgatus (strain ATCC 8482 / DSM 1447 / JCM 5826 / CCUG 4940 / NBRC 14291 / NCTC 11154) (Bacteroides vulgatus), this protein is GTPase Der.